The primary structure comprises 631 residues: Phosphomethylpyrimidine synthase (631 aa).

Substrate contacts are provided by residues Asn239, Met268, Tyr297, His333, 353–355 (SRG), 394–397 (DGLR), and Glu433. His437 is a binding site for Zn(2+). Residue Tyr460 coordinates substrate. Residue His501 coordinates Zn(2+). [4Fe-4S] cluster contacts are provided by Cys581, Cys584, and Cys589.

It belongs to the ThiC family. As to quaternary structure, homodimer. It depends on [4Fe-4S] cluster as a cofactor.

It carries out the reaction 5-amino-1-(5-phospho-beta-D-ribosyl)imidazole + S-adenosyl-L-methionine = 4-amino-2-methyl-5-(phosphooxymethyl)pyrimidine + CO + 5'-deoxyadenosine + formate + L-methionine + 3 H(+). Its pathway is cofactor biosynthesis; thiamine diphosphate biosynthesis. Catalyzes the synthesis of the hydroxymethylpyrimidine phosphate (HMP-P) moiety of thiamine from aminoimidazole ribotide (AIR) in a radical S-adenosyl-L-methionine (SAM)-dependent reaction. The protein is Phosphomethylpyrimidine synthase of Escherichia coli O6:K15:H31 (strain 536 / UPEC).